The sequence spans 133 residues: Antifungal protein ginkbilobin-like protein 1 (133 aa).

A signal peptide spans 1 to 24 (MSMGSFGFALAVMVLAVLVASAAG). The Gnk2-homologous domain occupies 28-133 (TNFVSSACNT…CFIRYEQYSI (106 aa)). Disulfide bonds link C35-C111, C87-C96, and C99-C124. N36 is a binding site for alpha-D-mannopyranose. Positions 118 and 129 each coordinate alpha-D-mannopyranose.

Its function is as follows. Exerts antifungal activity through its carbohydrate-binding specificity. The chain is Antifungal protein ginkbilobin-like protein 1 from Picea sitchensis (Sitka spruce).